A 194-amino-acid polypeptide reads, in one-letter code: A-type ATP synthase subunit E (194 aa).

Belongs to the V-ATPase E subunit family. Has multiple subunits with at least A(3), B(3), C, D, E, F, H, I and proteolipid K(x).

It localises to the cell membrane. Functionally, component of the A-type ATP synthase that produces ATP from ADP in the presence of a proton gradient across the membrane. This Saccharolobus islandicus (strain M.16.27) (Sulfolobus islandicus) protein is A-type ATP synthase subunit E.